The chain runs to 367 residues: MSELRFPEEKPLLRGQDTEMESADTFMSAADTDWKEHDIETPYGMLHVVIRGTPKGNRPAILTYHDVGLNHKLCFNTFFNYEDMQEITKHFVVCHVDAPGQQVGASQFPQGYQYPTMEQLAAMLPSVMQHFGFQSIIGIGVGAGAYVFAKFALIFPELVEGMVLINIDPNGKGWIDWAASKLSGLTSSLPETVLSHLFSQEELMNNTELVQNYRQQISSCVNQSNLQLFWNMYNSRRDLEMSRPGTVPNAKTLRAPVMLVVGDNAPAEDSVVECNSKLDPTNTTFLKMADSGGLPQVTQPGKLTEAFKYFLQGMGYMPSASMTRLARSRTASLTSASSVDGARPRPCTQSESSDGIGQINHTMEVSC.

The span at Met1 to Leu12 shows a compositional bias: basic and acidic residues. Disordered regions lie at residues Met1–Glu21 and Leu333–Cys367. Positions Cys347–Cys367 are enriched in polar residues.

Belongs to the NDRG family.

The protein localises to the cytoplasm. Its subcellular location is the cytosol. In terms of biological role, contributes to the maintenance of intracerebral BDNF levels within the normal range. May enhance growth factor-induced ERK1 and ERK2 phosphorylation. May attenuate growth factor-promoted ELK1 phosphorylation in a microtubule-dependent manner. The protein is Protein NDRG4-B (ndrg4-b) of Xenopus laevis (African clawed frog).